We begin with the raw amino-acid sequence, 610 residues long: Aspartate--tRNA(Asp/Asn) ligase (610 aa).

Glu-177 lines the L-aspartate pocket. The aspartate stretch occupies residues 201-204 (QLFK). Arg-223 is an L-aspartate binding site. Residues 223–225 (RDE) and Gln-232 contribute to the ATP site. His-461 lines the L-aspartate pocket. Glu-499 contributes to the ATP binding site. Residue Arg-506 participates in L-aspartate binding. 551 to 554 (GVDR) contacts ATP.

This sequence belongs to the class-II aminoacyl-tRNA synthetase family. Type 1 subfamily. As to quaternary structure, homodimer.

It is found in the cytoplasm. It catalyses the reaction tRNA(Asx) + L-aspartate + ATP = L-aspartyl-tRNA(Asx) + AMP + diphosphate. Aspartyl-tRNA synthetase with relaxed tRNA specificity since it is able to aspartylate not only its cognate tRNA(Asp) but also tRNA(Asn). Reaction proceeds in two steps: L-aspartate is first activated by ATP to form Asp-AMP and then transferred to the acceptor end of tRNA(Asp/Asn). This Parasynechococcus marenigrum (strain WH8102) protein is Aspartate--tRNA(Asp/Asn) ligase.